The sequence spans 179 residues: ATP synthase subunit delta (179 aa).

The protein belongs to the ATPase delta chain family. In terms of assembly, F-type ATPases have 2 components, F(1) - the catalytic core - and F(0) - the membrane proton channel. F(1) has five subunits: alpha(3), beta(3), gamma(1), delta(1), epsilon(1). F(0) has three main subunits: a(1), b(2) and c(10-14). The alpha and beta chains form an alternating ring which encloses part of the gamma chain. F(1) is attached to F(0) by a central stalk formed by the gamma and epsilon chains, while a peripheral stalk is formed by the delta and b chains.

The protein localises to the cell inner membrane. Its function is as follows. F(1)F(0) ATP synthase produces ATP from ADP in the presence of a proton or sodium gradient. F-type ATPases consist of two structural domains, F(1) containing the extramembraneous catalytic core and F(0) containing the membrane proton channel, linked together by a central stalk and a peripheral stalk. During catalysis, ATP synthesis in the catalytic domain of F(1) is coupled via a rotary mechanism of the central stalk subunits to proton translocation. This protein is part of the stalk that links CF(0) to CF(1). It either transmits conformational changes from CF(0) to CF(1) or is implicated in proton conduction. The sequence is that of ATP synthase subunit delta from Acidithiobacillus ferridurans.